Consider the following 151-residue polypeptide: Ribosome maturation factor RimP (151 aa).

The protein belongs to the RimP family.

Its subcellular location is the cytoplasm. Its function is as follows. Required for maturation of 30S ribosomal subunits. The protein is Ribosome maturation factor RimP of Haemophilus influenzae (strain 86-028NP).